Here is an 821-residue protein sequence, read N- to C-terminus: Phenylalanine--tRNA ligase beta subunit (821 aa).

A tRNA-binding domain is found at 39–149 (RTWAEGVVVG…DAVTVGEDVR (111 aa)). The B5 domain occupies 409–503 (PLERTLTLRL…RLYGYDRFEE (95 aa)). Mg(2+)-binding residues include Asp481, Asp487, Glu490, and Glu491. Residues 724–820 (STYPASDRDL…LVEKYAVTLR (97 aa)) enclose the FDX-ACB domain.

Belongs to the phenylalanyl-tRNA synthetase beta subunit family. Type 1 subfamily. Tetramer of two alpha and two beta subunits. Mg(2+) is required as a cofactor.

Its subcellular location is the cytoplasm. The catalysed reaction is tRNA(Phe) + L-phenylalanine + ATP = L-phenylalanyl-tRNA(Phe) + AMP + diphosphate + H(+). This Thermosynechococcus vestitus (strain NIES-2133 / IAM M-273 / BP-1) protein is Phenylalanine--tRNA ligase beta subunit.